The following is a 375-amino-acid chain: Alanine racemase (375 aa).

Lys-35 functions as the Proton acceptor; specific for D-alanine in the catalytic mechanism. Residue Lys-35 is modified to N6-(pyridoxal phosphate)lysine. Substrate is bound at residue Arg-133. Residue Tyr-261 is the Proton acceptor; specific for L-alanine of the active site. Position 309 (Met-309) interacts with substrate.

Belongs to the alanine racemase family. The cofactor is pyridoxal 5'-phosphate.

The enzyme catalyses L-alanine = D-alanine. It participates in amino-acid biosynthesis; D-alanine biosynthesis; D-alanine from L-alanine: step 1/1. Its function is as follows. Catalyzes the interconversion of L-alanine and D-alanine. May also act on other amino acids. The sequence is that of Alanine racemase (alr) from Syntrophobacter fumaroxidans (strain DSM 10017 / MPOB).